A 216-amino-acid polypeptide reads, in one-letter code: ATP-dependent Clp protease proteolytic subunit (216 aa).

The Nucleophile role is filled by Ser101. His126 is a catalytic residue.

Belongs to the peptidase S14 family. In terms of assembly, component of the chloroplastic Clp protease core complex.

Its subcellular location is the plastid. The protein localises to the chloroplast stroma. The catalysed reaction is Hydrolysis of proteins to small peptides in the presence of ATP and magnesium. alpha-casein is the usual test substrate. In the absence of ATP, only oligopeptides shorter than five residues are hydrolyzed (such as succinyl-Leu-Tyr-|-NHMec, and Leu-Tyr-Leu-|-Tyr-Trp, in which cleavage of the -Tyr-|-Leu- and -Tyr-|-Trp bonds also occurs).. In terms of biological role, cleaves peptides in various proteins in a process that requires ATP hydrolysis. Has a chymotrypsin-like activity. Plays a major role in the degradation of misfolded proteins. This Saccharum hybrid (Sugarcane) protein is ATP-dependent Clp protease proteolytic subunit.